Here is a 182-residue protein sequence, read N- to C-terminus: Large ribosomal subunit protein uL5 (182 aa).

It belongs to the universal ribosomal protein uL5 family. As to quaternary structure, part of the 50S ribosomal subunit; part of the 5S rRNA/L5/L18/L25 subcomplex. Contacts the 5S rRNA and the P site tRNA. Forms a bridge to the 30S subunit in the 70S ribosome.

Its function is as follows. This is one of the proteins that bind and probably mediate the attachment of the 5S RNA into the large ribosomal subunit, where it forms part of the central protuberance. In the 70S ribosome it contacts protein S13 of the 30S subunit (bridge B1b), connecting the 2 subunits; this bridge is implicated in subunit movement. Contacts the P site tRNA; the 5S rRNA and some of its associated proteins might help stabilize positioning of ribosome-bound tRNAs. The chain is Large ribosomal subunit protein uL5 from Thermus thermophilus (strain ATCC BAA-163 / DSM 7039 / HB27).